The primary structure comprises 332 residues: MRIIFAGTPEPAVVALQKLIESHHEVAAVITRPDARRGRGRSLHPSPVKALAEEHGIEVLTPTTLKQGTEDGDALRARLAEIAPEAIPVVAYGNLITEDLLSLPKHGWVNLHFSLLPTWRGAAPVQAAIAAGDERTGATTFRIDQGLDTGDILATMEETIRPTDTADDLLTRLAYAGGDLLVETMNGLEDGSIIPQPQEGEATYAHKIATEDARIDWTAKVDVIDRHIRAHTPGPGAWTLLGESRLKVGPVSVVEPAELGELSDTTALTSLQPGEVHVAKKEVMVGTGSTPVRLGQIQPPGKKMMNAADWGRGLSSQASQAAEGGQVEVKFS.

114 to 117 (SLLP) provides a ligand contact to (6S)-5,6,7,8-tetrahydrofolate.

The protein belongs to the Fmt family.

The enzyme catalyses L-methionyl-tRNA(fMet) + (6R)-10-formyltetrahydrofolate = N-formyl-L-methionyl-tRNA(fMet) + (6S)-5,6,7,8-tetrahydrofolate + H(+). Its function is as follows. Attaches a formyl group to the free amino group of methionyl-tRNA(fMet). The formyl group appears to play a dual role in the initiator identity of N-formylmethionyl-tRNA by promoting its recognition by IF2 and preventing the misappropriation of this tRNA by the elongation apparatus. This is Methionyl-tRNA formyltransferase from Corynebacterium aurimucosum (strain ATCC 700975 / DSM 44827 / CIP 107346 / CN-1) (Corynebacterium nigricans).